Consider the following 1529-residue polypeptide: Myosin-11 (1529 aa).

Residues isoleucine 11–methionine 60 enclose the Myosin N-terminal SH3-like domain. The region spanning glycine 65–threonine 735 is the Myosin motor domain. Residues glycine 159–threonine 166 and asparagine 212–lysine 220 each bind ATP. 4 actin-binding regions span residues leucine 498–phenylalanine 532, threonine 534–valine 557, phenylalanine 592–leucine 616, and leucine 616–asparagine 638. IQ domains lie at leucine 738–serine 767, leucine 761–alanine 790, arginine 786–valine 815, leucine 809–alanine 838, glutamine 834–leucine 863, and leucine 857–glutamate 886. The stretch at threonine 887–alanine 1059 forms a coiled coil. Basic and acidic residues predominate over residues glutamate 993 to alanine 1027. Disordered stretches follow at residues glutamate 993–glutamine 1031 and isoleucine 1096–lysine 1115. The Dilute domain maps to aspartate 1163–glutamate 1472.

Belongs to the TRAFAC class myosin-kinesin ATPase superfamily. Myosin family. Plant myosin class XI subfamily. In terms of assembly, homodimer.

Its subcellular location is the cytoplasm. Myosin heavy chain that is required for the cell cycle-regulated transport of various organelles and proteins for their segregation. Functions by binding with its tail domain to receptor proteins on organelles and exerting force with its N-terminal motor domain against actin filaments, thereby transporting its cargo along polarized actin cables. Involved in trafficking of Golgi stacks, mitochondria and peroxisomes. The chain is Myosin-11 (XI-E) from Arabidopsis thaliana (Mouse-ear cress).